A 672-amino-acid chain; its full sequence is Acetyl-coenzyme A synthetase (672 aa).

CoA contacts are provided by residues 205-208 and threonine 325; that span reads RGGK. Residues 401 to 403, 425 to 430, aspartate 516, and arginine 531 contribute to the ATP site; these read GEP and DTYWQT. Position 539 (serine 539) interacts with CoA. Arginine 542 provides a ligand contact to ATP. A CoA-binding site is contributed by arginine 600.

Belongs to the ATP-dependent AMP-binding enzyme family.

The enzyme catalyses acetate + ATP + CoA = acetyl-CoA + AMP + diphosphate. In Phycomyces blakesleeanus (strain ATCC 8743b / DSM 1359 / FGSC 10004 / NBRC 33097 / NRRL 1555), this protein is Acetyl-coenzyme A synthetase (facA).